A 63-amino-acid chain; its full sequence is Cecropin-B (63 aa).

The N-terminal stretch at 1–23 (MNFNKIFVFVALILAISLGNSEA) is a signal peptide. Arg62 bears the Arginine amide mark.

Belongs to the cecropin family. As to expression, strongly expressed in larval, pupal and adult fat body and hemocytes after injection of bacteria. Maximal expression is seen in pupae.

The protein resides in the secreted. Its function is as follows. Cecropins have lytic and antibacterial activity against several Gram-positive and Gram-negative bacteria. This is Cecropin-B (CecB) from Drosophila melanogaster (Fruit fly).